Reading from the N-terminus, the 475-residue chain is UDP-N-acetylmuramate--L-alanine ligase (475 aa).

125–131 (GTHGKTT) serves as a coordination point for ATP.

Belongs to the MurCDEF family.

Its subcellular location is the cytoplasm. The catalysed reaction is UDP-N-acetyl-alpha-D-muramate + L-alanine + ATP = UDP-N-acetyl-alpha-D-muramoyl-L-alanine + ADP + phosphate + H(+). It participates in cell wall biogenesis; peptidoglycan biosynthesis. Functionally, cell wall formation. In Haemophilus influenzae (strain 86-028NP), this protein is UDP-N-acetylmuramate--L-alanine ligase.